Here is a 330-residue protein sequence, read N- to C-terminus: Ketol-acid reductoisomerase (NADP(+)) (330 aa).

Residues 2–182 (IHVYYDKDAN…GCTKAGVIET (181 aa)) form the KARI N-terminal Rossmann domain. NADP(+)-binding positions include 25–28 (YGSQ), arginine 48, serine 51, serine 53, and 83–86 (DEVQ). Histidine 108 is a catalytic residue. NADP(+) is bound at residue glycine 134. In terms of domain architecture, KARI C-terminal knotted spans 183–328 (TFKEETETDL…KKLRDMMPWI (146 aa)). Positions 191, 195, 227, and 231 each coordinate Mg(2+). Residue serine 252 participates in substrate binding.

This sequence belongs to the ketol-acid reductoisomerase family. Mg(2+) serves as cofactor.

The enzyme catalyses (2R)-2,3-dihydroxy-3-methylbutanoate + NADP(+) = (2S)-2-acetolactate + NADPH + H(+). It carries out the reaction (2R,3R)-2,3-dihydroxy-3-methylpentanoate + NADP(+) = (S)-2-ethyl-2-hydroxy-3-oxobutanoate + NADPH + H(+). Its pathway is amino-acid biosynthesis; L-isoleucine biosynthesis; L-isoleucine from 2-oxobutanoate: step 2/4. It functions in the pathway amino-acid biosynthesis; L-valine biosynthesis; L-valine from pyruvate: step 2/4. Functionally, involved in the biosynthesis of branched-chain amino acids (BCAA). Catalyzes an alkyl-migration followed by a ketol-acid reduction of (S)-2-acetolactate (S2AL) to yield (R)-2,3-dihydroxy-isovalerate. In the isomerase reaction, S2AL is rearranged via a Mg-dependent methyl migration to produce 3-hydroxy-3-methyl-2-ketobutyrate (HMKB). In the reductase reaction, this 2-ketoacid undergoes a metal-dependent reduction by NADPH to yield (R)-2,3-dihydroxy-isovalerate. This Halothermothrix orenii (strain H 168 / OCM 544 / DSM 9562) protein is Ketol-acid reductoisomerase (NADP(+)).